We begin with the raw amino-acid sequence, 433 residues long: Probable D-serine dehydratase (433 aa).

At Lys-110 the chain carries N6-(pyridoxal phosphate)lysine.

This sequence belongs to the serine/threonine dehydratase family. DsdA subfamily. Requires pyridoxal 5'-phosphate as cofactor.

The enzyme catalyses D-serine = pyruvate + NH4(+). The polypeptide is Probable D-serine dehydratase (Oenococcus oeni (strain ATCC BAA-331 / PSU-1)).